Here is a 345-residue protein sequence, read N- to C-terminus: MKALVKAKREEGIWMQHDVPVPEVGVHDVMIKVTKSAICGTDVHIYNWDEWSQKTVPVPMVVGHEYVGRVEKVGAEVEAFRPGERVSGEGHVTCGFCRNCRAGRRHLCRHTVGVGVNRPGSFAEYVVIPADNVYRIPDDIPDDIAAIFDPFGNATHTALSFDLVGEDVLVTGAGPIGVMAAAIARHVGARHVVVTDVNDYRLDLARRMGASRAVNVAKEDLRAVMSELGMREGFDVGLEMSGNGRAFRQLLEVMNHGGKVALLGIMAGPEPVDWSQVVFKGLQLKGVYGREMYETWYKMVAMLQSGLDLSAVVTHRFSIDDFQQGFDVMRSGRSGKVVLDWGAAR.

C39 is a Zn(2+) binding site. Catalysis depends on charge relay system residues T41 and H44. Zn(2+)-binding residues include H64, E65, C94, C97, C100, and C108. NAD(+) contacts are provided by residues I176, D196, R201, 263–265 (LGI), and 287–288 (VY).

Belongs to the zinc-containing alcohol dehydrogenase family. Homotetramer. Requires Zn(2+) as cofactor.

The protein resides in the cytoplasm. It catalyses the reaction L-threonine + NAD(+) = (2S)-2-amino-3-oxobutanoate + NADH + H(+). The protein operates within amino-acid degradation; L-threonine degradation via oxydo-reductase pathway; glycine from L-threonine: step 1/2. Its function is as follows. Catalyzes the NAD(+)-dependent oxidation of L-threonine to 2-amino-3-ketobutyrate. This is L-threonine 3-dehydrogenase from Anaeromyxobacter sp. (strain K).